The sequence spans 149 residues: Calmodulin (149 aa).

N-acetylalanine is present on alanine 2. 4 consecutive EF-hand domains span residues 8-43 (EQIS…LGQN), 44-79 (PTEA…KMRD), 81-116 (DSEE…LGEK), and 117-149 (LTDN…MLSK). 20 residues coordinate Ca(2+): aspartate 21, aspartate 23, aspartate 25, threonine 27, glutamate 32, aspartate 57, aspartate 59, asparagine 61, threonine 63, glutamate 68, aspartate 94, aspartate 96, asparagine 98, tyrosine 100, glutamate 105, aspartate 130, aspartate 132, aspartate 134, glutamine 136, and glutamate 141.

The protein belongs to the calmodulin family. Trimethylation of Lys-116 observed in other calmodulins is absent here.

Calmodulin mediates the control of a large number of enzymes, ion channels and other proteins by Ca(2+). Among the enzymes to be stimulated by the calmodulin-Ca(2+) complex are a number of protein kinases and phosphatases. This is Calmodulin (CMD1) from Pleurotus cornucopiae (Cornucopia mushroom).